Consider the following 225-residue polypeptide: uncharacterized protein (225 aa).

The interval 32-82 (PKDKKKQNDTENKKKQPKDGENDKQKEQAETQPFEWIQQKDADDKKESNTA) is disordered. Basic and acidic residues-rich tracts occupy residues 37–60 (KQNDTENKKKQPKDGENDKQKEQA) and 69–79 (QQKDADDKKES).

Belongs to the MG067/MG068/MG395 family.

This is an uncharacterized protein from Mycoplasma pneumoniae (strain ATCC 29342 / M129 / Subtype 1) (Mycoplasmoides pneumoniae).